Consider the following 307-residue polypeptide: 4-hydroxy-3-methylbut-2-enyl diphosphate reductase (307 aa).

[4Fe-4S] cluster is bound at residue cysteine 13. Histidine 42 and histidine 75 together coordinate (2E)-4-hydroxy-3-methylbut-2-enyl diphosphate. Positions 42 and 75 each coordinate dimethylallyl diphosphate. Isopentenyl diphosphate contacts are provided by histidine 42 and histidine 75. Cysteine 97 lines the [4Fe-4S] cluster pocket. Histidine 125 contacts (2E)-4-hydroxy-3-methylbut-2-enyl diphosphate. Histidine 125 is a binding site for dimethylallyl diphosphate. An isopentenyl diphosphate-binding site is contributed by histidine 125. Glutamate 127 serves as the catalytic Proton donor. Threonine 165 lines the (2E)-4-hydroxy-3-methylbut-2-enyl diphosphate pocket. Cysteine 195 provides a ligand contact to [4Fe-4S] cluster. (2E)-4-hydroxy-3-methylbut-2-enyl diphosphate-binding residues include serine 223, serine 224, asparagine 225, and serine 267. Dimethylallyl diphosphate is bound by residues serine 223, serine 224, asparagine 225, and serine 267. The isopentenyl diphosphate site is built by serine 223, serine 224, asparagine 225, and serine 267.

This sequence belongs to the IspH family. Requires [4Fe-4S] cluster as cofactor.

The catalysed reaction is isopentenyl diphosphate + 2 oxidized [2Fe-2S]-[ferredoxin] + H2O = (2E)-4-hydroxy-3-methylbut-2-enyl diphosphate + 2 reduced [2Fe-2S]-[ferredoxin] + 2 H(+). It catalyses the reaction dimethylallyl diphosphate + 2 oxidized [2Fe-2S]-[ferredoxin] + H2O = (2E)-4-hydroxy-3-methylbut-2-enyl diphosphate + 2 reduced [2Fe-2S]-[ferredoxin] + 2 H(+). Its pathway is isoprenoid biosynthesis; dimethylallyl diphosphate biosynthesis; dimethylallyl diphosphate from (2E)-4-hydroxy-3-methylbutenyl diphosphate: step 1/1. It participates in isoprenoid biosynthesis; isopentenyl diphosphate biosynthesis via DXP pathway; isopentenyl diphosphate from 1-deoxy-D-xylulose 5-phosphate: step 6/6. Catalyzes the conversion of 1-hydroxy-2-methyl-2-(E)-butenyl 4-diphosphate (HMBPP) into a mixture of isopentenyl diphosphate (IPP) and dimethylallyl diphosphate (DMAPP). Acts in the terminal step of the DOXP/MEP pathway for isoprenoid precursor biosynthesis. This Chlamydia trachomatis serovar L2 (strain ATCC VR-902B / DSM 19102 / 434/Bu) protein is 4-hydroxy-3-methylbut-2-enyl diphosphate reductase.